Reading from the N-terminus, the 150-residue chain is Galactose-binding lectin (150 aa).

D-galactose-binding residues include H16 and G19. Residue N26 is glycosylated (N-linked (GlcNAc...) asparagine). D-galactose is bound by residues D27, 35–37 (DIH), H64, and G67. Residue N74 is glycosylated (N-linked (GlcNAc...) asparagine). D-galactose-binding positions include E75, 83–85 (DRH), H108, and G111. N118 is a glycosylation site (N-linked (GlcNAc...) asparagine). D-galactose is bound by residues E119 and 127-129 (DKH).

In terms of assembly, homodimer. Likely to form large oligomers; oligomerization enhances hemagglutination activity. In terms of processing, glycosylated.

Hemagglutination activity is not dependent on divalent cations. Hemagglutination activity is highly inhibited by D-galactose and N-acetyl-D-galactosamine, and to a lesser extent by raffinose. Also inhibited by melibiose and alpha-lactose, but not by beta-lactose or D-glucose. Its function is as follows. D-galactose-binding lectin. Also binds N-acetyl-D-galactosamine. Has hemagglutination activity towards all types of human erythrocytes (O, A and B) and rabbit erythrocytes. Agglutinates Gram-negative and Gram-positive bacteria including E.coli DH5-alpha and L.plantarum ATCC8014, respectively, and has bacteriostatic activity against them. Also agglutinates M.lysodeikticus. May be involved in innate immunity by recognizing and eliminating pathogens. This chain is Galactose-binding lectin, found in Mytilus californianus (California mussel).